Consider the following 293-residue polypeptide: MNAIANLAATLRADLGECLADLAVDALIDEAELSPKPALVDRRGNGAHADLHLGLMQASALSLWPCFKEMADAAQRHGRIDARLRGVLGQLGRDGEAAMLRTTEGVNTHRGAIWALGLLVAAAALEPRRTQAGEVAARAGRIALLDDPAAAIGDSHGERVRRRYGVGGAREEARLGFPRAVRHGLPQLWRSREGGAGEQNARLDALLAIMSVLDDTCVLHRAGRVGLAAMQDGARAVLAAGGSASLAGRRRLCELDRRLLALNASPGGAADLLAACLFLDRLPAVSGGWAGSL.

It belongs to the CitG/MdcB family.

It catalyses the reaction 3'-dephospho-CoA + ATP = 2'-(5''-triphospho-alpha-D-ribosyl)-3'-dephospho-CoA + adenine. Involved in the formation of 2-(5''-phosphoribosyl)-3'-dephosphocoenzyme-A, the prosthetic group of the acyl-carrier protein of the malonate decarboxylase. The protein is Probable 2-(5''-triphosphoribosyl)-3'-dephosphocoenzyme-A synthase of Pseudomonas aeruginosa (strain UCBPP-PA14).